The following is a 182-amino-acid chain: P21 prophage-derived terminase small subunit (182 aa).

31 to 36 lines the ATP pocket; sequence SKGSKG.

This sequence belongs to the terminase small subunit family. As to quaternary structure, heterooligomer of gp1 and gp2.

Its function is as follows. Involved in the initiation of the phage DNA packaging into the prohead. Processes replicating concatemeric DNA into pieces of unit length with cohesive ends. The polypeptide is P21 prophage-derived terminase small subunit (nohA) (Escherichia coli O6:H1 (strain CFT073 / ATCC 700928 / UPEC)).